The chain runs to 230 residues: UPF0173 metal-dependent hydrolase Pden_0574 (230 aa).

It belongs to the UPF0173 family.

This Paracoccus denitrificans (strain Pd 1222) protein is UPF0173 metal-dependent hydrolase Pden_0574.